We begin with the raw amino-acid sequence, 196 residues long: Recombination protein RecR (196 aa).

Residues Cys57–Cys72 form a C4-type zinc finger. Residues Ser80–Pro175 form the Toprim domain.

This sequence belongs to the RecR family.

May play a role in DNA repair. It seems to be involved in an RecBC-independent recombinational process of DNA repair. It may act with RecF and RecO. In Albidiferax ferrireducens (strain ATCC BAA-621 / DSM 15236 / T118) (Rhodoferax ferrireducens), this protein is Recombination protein RecR.